We begin with the raw amino-acid sequence, 106 residues long: MNDSEFHRLADQLWLTIEERLDDRDGDSDIDCEINGGVLTITFENGSKIIINRQEPLHQVWLATKQGGYHFDLKGDEWICDRSGETFWDLLEQAATQQAGETVSFR.

This sequence belongs to the frataxin family.

Involved in iron-sulfur (Fe-S) cluster assembly. May act as a regulator of Fe-S biogenesis. This chain is Iron-sulfur cluster assembly protein CyaY, found in Shigella flexneri.